A 257-amino-acid polypeptide reads, in one-letter code: Aspartate/glutamate leucyltransferase (257 aa).

It belongs to the R-transferase family. Bpt subfamily.

The protein localises to the cytoplasm. The catalysed reaction is N-terminal L-glutamyl-[protein] + L-leucyl-tRNA(Leu) = N-terminal L-leucyl-L-glutamyl-[protein] + tRNA(Leu) + H(+). The enzyme catalyses N-terminal L-aspartyl-[protein] + L-leucyl-tRNA(Leu) = N-terminal L-leucyl-L-aspartyl-[protein] + tRNA(Leu) + H(+). Its function is as follows. Functions in the N-end rule pathway of protein degradation where it conjugates Leu from its aminoacyl-tRNA to the N-termini of proteins containing an N-terminal aspartate or glutamate. In Sphingopyxis alaskensis (strain DSM 13593 / LMG 18877 / RB2256) (Sphingomonas alaskensis), this protein is Aspartate/glutamate leucyltransferase.